Reading from the N-terminus, the 356-residue chain is Peptide chain release factor 1 (356 aa).

Q233 is subject to N5-methylglutamine.

Belongs to the prokaryotic/mitochondrial release factor family. Methylated by PrmC. Methylation increases the termination efficiency of RF1.

The protein localises to the cytoplasm. Functionally, peptide chain release factor 1 directs the termination of translation in response to the peptide chain termination codons UAG and UAA. The protein is Peptide chain release factor 1 of Oceanobacillus iheyensis (strain DSM 14371 / CIP 107618 / JCM 11309 / KCTC 3954 / HTE831).